Consider the following 361-residue polypeptide: Phosphoserine aminotransferase (361 aa).

Arg-42 serves as a coordination point for L-glutamate. Residues 76-77, Trp-102, Thr-153, Asp-173, and Gln-196 each bind pyridoxal 5'-phosphate; that span reads AR. Lys-197 bears the N6-(pyridoxal phosphate)lysine mark. A pyridoxal 5'-phosphate-binding site is contributed by 238–239; sequence NT.

The protein belongs to the class-V pyridoxal-phosphate-dependent aminotransferase family. SerC subfamily. Homodimer. Pyridoxal 5'-phosphate serves as cofactor.

It is found in the cytoplasm. The catalysed reaction is O-phospho-L-serine + 2-oxoglutarate = 3-phosphooxypyruvate + L-glutamate. It carries out the reaction 4-(phosphooxy)-L-threonine + 2-oxoglutarate = (R)-3-hydroxy-2-oxo-4-phosphooxybutanoate + L-glutamate. Its pathway is amino-acid biosynthesis; L-serine biosynthesis; L-serine from 3-phospho-D-glycerate: step 2/3. It functions in the pathway cofactor biosynthesis; pyridoxine 5'-phosphate biosynthesis; pyridoxine 5'-phosphate from D-erythrose 4-phosphate: step 3/5. Functionally, catalyzes the reversible conversion of 3-phosphohydroxypyruvate to phosphoserine and of 3-hydroxy-2-oxo-4-phosphonooxybutanoate to phosphohydroxythreonine. The polypeptide is Phosphoserine aminotransferase (Buchnera aphidicola subsp. Acyrthosiphon pisum (strain 5A)).